The following is a 561-amino-acid chain: Mercuric reductase (561 aa).

One can recognise an HMA domain in the interval 1-65; the sequence is MTTLKITGMT…AVAGLGYEAT (65 aa). Positions 11 and 14 each coordinate a metal cation. 3 residues coordinate FAD: Ala-110, Gly-130, and Thr-135. A disulfide bond links Cys-136 and Cys-141. FAD contacts are provided by Lys-145, Ala-211, Asp-403, and Val-411. Residues Cys-558 and Cys-559 each contribute to the Hg(2+) site.

Belongs to the class-I pyridine nucleotide-disulfide oxidoreductase family. As to quaternary structure, homodimer. Requires FAD as cofactor.

The enzyme catalyses Hg + NADP(+) + H(+) = Hg(2+) + NADPH. Resistance to Hg(2+) in bacteria appears to be governed by a specialized system which includes mercuric reductase. MerA protein is responsible for volatilizing mercury as Hg(0). This chain is Mercuric reductase (merA), found in Acinetobacter calcoaceticus.